The chain runs to 315 residues: Ribosomal protein L11 methyltransferase (315 aa).

S-adenosyl-L-methionine contacts are provided by T164, G185, D207, and N249.

Belongs to the methyltransferase superfamily. PrmA family.

Its subcellular location is the cytoplasm. The catalysed reaction is L-lysyl-[protein] + 3 S-adenosyl-L-methionine = N(6),N(6),N(6)-trimethyl-L-lysyl-[protein] + 3 S-adenosyl-L-homocysteine + 3 H(+). Its function is as follows. Methylates ribosomal protein L11. This chain is Ribosomal protein L11 methyltransferase, found in Lactobacillus gasseri (strain ATCC 33323 / DSM 20243 / BCRC 14619 / CIP 102991 / JCM 1131 / KCTC 3163 / NCIMB 11718 / NCTC 13722 / AM63).